We begin with the raw amino-acid sequence, 205 residues long: Ras-related protein Rab-1A (205 aa).

An N-acetylserine modification is found at serine 2. GTP contacts are provided by serine 20, glycine 21, glycine 23, lysine 24, serine 25, cysteine 26, glutamate 38, and threonine 43. Serine 25 contributes to the Mg(2+) binding site. The Switch 1 motif lies at 34–48; it reads DTYTESYISTIGVDF. Residue threonine 43 coordinates Mg(2+). Residues lysine 49 and lysine 61 each participate in a glycyl lysine isopeptide (Lys-Gly) (interchain with G-Cter in ubiquitin) cross-link. Residue aspartate 66 coordinates Mg(2+). Positions 66–83 match the Switch 2 motif; the sequence is DTAGQERFRTITSSYYRG. GTP is bound by residues glycine 69, asparagine 124, lysine 125, aspartate 127, alanine 155, and lysine 156. Positions 178–205 are disordered; that stretch reads PGATAGGAEKSNVKIQSTPVKQSGGGCC. Serine 194 bears the Phosphoserine mark. S-geranylgeranyl cysteine attachment occurs at residues cysteine 204 and cysteine 205.

The protein belongs to the small GTPase superfamily. Rab family. In terms of assembly, may interact with YIPF5. Interacts with C9orf72; the interaction mediates recruitment of RAB1A to the ATG1/ULK1 kinase complex. Interacts with GDI1; this promotes dissociation from membranes. Requires Mg(2+) as cofactor. Post-translationally, phosphorylated by CDK1 kinase during mitosis. Ubiquitinated via 'Lys-11'-linked ubiquitination on Lys-49 and Lys-61; impairing the recruitment of guanosine diphosphate (GDP) dissociation inhibitor 1/GDI1.

It localises to the golgi apparatus. The protein resides in the endoplasmic reticulum. The protein localises to the early endosome. It is found in the cytoplasm. Its subcellular location is the cytosol. It localises to the membrane. The protein resides in the melanosome. It carries out the reaction GTP + H2O = GDP + phosphate + H(+). With respect to regulation, regulated by guanine nucleotide exchange factors (GEFs) which promote the exchange of bound GDP for free GTP. Regulated by GTPase activating proteins (GAPs) which increase the GTP hydrolysis activity. Inhibited by GDP dissociation inhibitors (GDIs). In terms of biological role, the small GTPases Rab are key regulators of intracellular membrane trafficking, from the formation of transport vesicles to their fusion with membranes. Rabs cycle between an inactive GDP-bound form and an active GTP-bound form that is able to recruit to membranes different sets of downstream effectors directly responsible for vesicle formation, movement, tethering and fusion. RAB1A regulates vesicular protein transport from the endoplasmic reticulum (ER) to the Golgi compartment and on to the cell surface, and plays a role in IL-8 and growth hormone secretion. Required to modulate the compacted morphology of the Golgi. Regulates the level of CASR present at the cell membrane. Plays a role in cell adhesion and cell migration, via its role in protein trafficking. Plays a role in autophagosome assembly and cellular defense reactions against pathogenic bacteria. Plays a role in microtubule-dependent protein transport by early endosomes and in anterograde melanosome transport. This Canis lupus familiaris (Dog) protein is Ras-related protein Rab-1A (RAB1A).